A 594-amino-acid polypeptide reads, in one-letter code: Amino-acid permease 1 (594 aa).

12 helical membrane passes run 75-95 (QMIA…GKSL), 101-121 (GSLM…ILSL), 146-166 (IGFA…PSEI), 181-201 (LNPA…NAFG), 210-230 (FVSS…AIII), 297-317 (VFYR…LVVP), 323-343 (LGNV…VLPH), 344-364 (ITNA…VFAA), 390-410 (PVIS…NAAP), 416-436 (FDWL…LSFI), 468-488 (YGVL…IFPV), and 498-518 (FFVS…SPIF). Residues 550-587 (TSELSEKDLTKPNLQSNDNKNSEDLESNTPPQKKSALQ) form a disordered region.

This sequence belongs to the amino acid-polyamine-organocation (APC) superfamily.

Its subcellular location is the membrane. In Schizosaccharomyces pombe (strain 972 / ATCC 24843) (Fission yeast), this protein is Amino-acid permease 1 (aap1).